We begin with the raw amino-acid sequence, 67 residues long: Small ribosomal subunit protein eS27 (67 aa).

Residues cysteine 22, cysteine 25, cysteine 41, and cysteine 44 each coordinate Zn(2+). The segment at 22–44 (CPDCGNEQVVFSHAAMVVRCLVC) adopts a C4-type zinc-finger fold.

The protein belongs to the eukaryotic ribosomal protein eS27 family. In terms of assembly, part of the 30S ribosomal subunit. Zn(2+) serves as cofactor.

This is Small ribosomal subunit protein eS27 from Pyrobaculum islandicum (strain DSM 4184 / JCM 9189 / GEO3).